Reading from the N-terminus, the 513-residue chain is HTH-type transcriptional regulatory protein TyrR (513 aa).

Residues 2–72 form the ACT domain; sequence RLEVFCEDRL…GVTDVRTVPW (71 aa). In terms of domain architecture, PAS spans 78–114; the sequence is EHLALSALLEALPEPVLSVDMKSKVDMANPASCQLFG. Residues 206–428 form the Sigma-54 factor interaction domain; the sequence is IVAVSPKMKH…LKNAIYRALT (223 aa). ATP-binding positions include 234-241 and 290-299; these read GDTGTGKD and ANGGSVLLDE. Residues 482–502 constitute a DNA-binding region (H-T-H motif); the sequence is STRKLAKRLGVSHTAIANKLR.

As to quaternary structure, homodimer. In presence of tyrosine (or high concentrations of phenylalanine or tryptophan) and ATP, it self-associates to form an hexamer. At low tyrosine concentrations, homodimers can bind to certain recognition sequences referred to as 'strong TyrR boxes'. Homohexamers are the active repressing species, interacting with two or three tyrR boxes in the targeted regulatory DNA, including 'strong TyrR boxes' and lower-affinity sites called 'weak TyrR boxes'.

Its subcellular location is the cytoplasm. Binding of ATP strongly enhances the affinity of TyrR for tyrosine. Functionally, dual transcriptional regulator of the TyrR regulon, which includes a number of genes coding for proteins involved in the biosynthesis or transport of the three aromatic amino acids, phenylalanine, tyrosine and tryptophan. These three aromatic amino acids act as effectors which bind to the TyrR protein to form an active regulatory protein. Modulates the expression of at least eight unlinked transcription units, including aroF, aroG, aroLM, aroP, mtr, tyrA, tyrB and tyrP. In most cases TyrR acts as a repressor, but positive effects have been observed on the tyrP gene, which is repressed in the presence of tyrosine and activated at high phenylalanine concentrations. Is also involved in activation, but not repression, of mtr expression in association with phenylalanine or tyrosine. Acts by binding specifically to TyrR boxes in the promoter region of the target genes. The chain is HTH-type transcriptional regulatory protein TyrR from Escherichia coli (strain K12).